The primary structure comprises 118 residues: Ribosome-binding factor A (118 aa).

The protein belongs to the RbfA family. In terms of assembly, monomer. Binds 30S ribosomal subunits, but not 50S ribosomal subunits or 70S ribosomes.

It is found in the cytoplasm. Functionally, one of several proteins that assist in the late maturation steps of the functional core of the 30S ribosomal subunit. Associates with free 30S ribosomal subunits (but not with 30S subunits that are part of 70S ribosomes or polysomes). Required for efficient processing of 16S rRNA. May interact with the 5'-terminal helix region of 16S rRNA. This Dehalococcoides mccartyi (strain ATCC BAA-2266 / KCTC 15142 / 195) (Dehalococcoides ethenogenes (strain 195)) protein is Ribosome-binding factor A.